The following is a 249-amino-acid chain: MRILVSNDDGFHAEGIQVLATELRKIAEVIIVAPDRNRSAASSSLTLVEPLRPRHLDNGDYCVNGTPADCVHLALNGFLSGQVDLVVSGINAGCNMGDDTIYSGTLAAALEGRHLGLPAIAVSLDGRQHYETAARVVCDLIPKLQHQLLNPREIININVPDLPFEELKGYKVCRLGYRSSSVEVIKQRDPRDETIYWIGPSALPEDESEGTDFYAVKNGYVSITPIQADLTAYHSLLSLQNWLDQEFTK.

A divalent metal cation-binding residues include Asp-8, Asp-9, Ser-39, and Asn-91.

It belongs to the SurE nucleotidase family. Requires a divalent metal cation as cofactor.

It is found in the cytoplasm. The enzyme catalyses a ribonucleoside 5'-phosphate + H2O = a ribonucleoside + phosphate. Functionally, nucleotidase that shows phosphatase activity on nucleoside 5'-monophosphates. The protein is 5'-nucleotidase SurE of Haemophilus influenzae (strain ATCC 51907 / DSM 11121 / KW20 / Rd).